A 122-amino-acid polypeptide reads, in one-letter code: Large ribosomal subunit protein uL18 (122 aa).

A disordered region spans residues 1 to 27 (MSNLSRKQQTQKRHRRLRRHLNGTAQR). The segment covering 9–21 (QTQKRHRRLRRHL) has biased composition (basic residues).

It belongs to the universal ribosomal protein uL18 family. As to quaternary structure, part of the 50S ribosomal subunit; part of the 5S rRNA/L5/L18/L25 subcomplex. Contacts the 5S and 23S rRNAs.

Its function is as follows. This is one of the proteins that bind and probably mediate the attachment of the 5S RNA into the large ribosomal subunit, where it forms part of the central protuberance. The protein is Large ribosomal subunit protein uL18 of Prochlorococcus marinus (strain MIT 9303).